The chain runs to 696 residues: Iron-sulfur clusters transporter ATM1, mitochondrial (696 aa).

The N-terminal 67 residues, 1–67 (MIKWGLFGAV…RFFSSSHKLG (67 aa)), are a transit peptide targeting the mitochondrion. Residues 68-109 (VNTKEDSSTYLFGRKISTSESKMLKSLLVTIWPKNKPSFKLR) are Mitochondrial matrix-facing. The chain crosses the membrane as a helical span at residues 110–131 (VIFALSLLIASKLLNVEVPFFF). The 291-residue stretch at 110–400 (VIFALSLLIA…LGSVYRELKQ (291 aa)) folds into the ABC transmembrane type-1 domain. Residues 132–154 (KKIIDEMNVDWNDQLGTVGTVIG) are Mitochondrial intermembrane-facing. Residues 155-178 (TLIIAYGGARFGAVLFGELRNAVF) traverse the membrane as a helical segment. Topologically, residues 179–227 (ASVAQTAIKRVAHNTFVHLLNMDLNFHLSRQTGGLTRAIDRGTKGISYV) are mitochondrial matrix. Residues 228 to 251 (LNAMVFHIIPISFEISMVCGILIY) form a helical membrane-spanning segment. A topological domain (mitochondrial intermembrane) is located at residue Asn252. The helical transmembrane segment at 253-273 (YGLSFAAVTLATMLSYSVFTI) threads the bilayer. The Mitochondrial matrix portion of the chain corresponds to 274–339 (KTTAWRTGFR…ASVKVATSLA (66 aa)). Residues 279-283 (RTGFR) and 342-345 (NAGQ) contribute to the glutathione site. A helical transmembrane segment spans residues 340–358 (YLNAGQNFIFTSALTAMMY). Residues 359–373 (MGCNGVATGSLTVGD) are Mitochondrial intermembrane-facing. The helical transmembrane segment at 374–395 (LVLINQLVFQLSVPLSFLGSVY) threads the bilayer. Gly392 lines the glutathione pocket. Topologically, residues 396–696 (RELKQSLLDM…EYAKETEEQK (301 aa)) are mitochondrial matrix. An ABC transporter domain is found at 438-674 (IKFENVTFGY…PNSLYSQLWN (237 aa)). ATP contacts are provided by residues Tyr447 and 471-482 (GPSGSGKSTILR).

Belongs to the ABC transporter superfamily. ABCB family. Heavy Metal importer (TC 3.A.1.210) subfamily. Homodimer.

The protein localises to the mitochondrion inner membrane. Performs an essential function in the generation of cytoplasmic iron-sulfur proteins by mediating the ATP-dependent export of Fe/S cluster precursors synthesized by NFS1 and other mitochondrial proteins. Hydrolyzes ATP. Binds glutathione and may function by transporting a glutathione-conjugated iron-sulfur compound. The chain is Iron-sulfur clusters transporter ATM1, mitochondrial from Debaryomyces hansenii (strain ATCC 36239 / CBS 767 / BCRC 21394 / JCM 1990 / NBRC 0083 / IGC 2968) (Yeast).